A 440-amino-acid chain; its full sequence is Chromosome partition protein MukF (440 aa).

The interval 208-236 is leucine-zipper; the sequence is LSETSGTLRELQDTLDAAGDKLQANLLRI.

This sequence belongs to the MukF family. Interacts, and probably forms a ternary complex, with MukE and MukB via its C-terminal region. The complex formation is stimulated by calcium or magnesium. It is required for an interaction between MukE and MukB.

It is found in the cytoplasm. It localises to the nucleoid. Functionally, involved in chromosome condensation, segregation and cell cycle progression. May participate in facilitating chromosome segregation by condensation DNA from both sides of a centrally located replisome during cell division. Not required for mini-F plasmid partitioning. Probably acts via its interaction with MukB and MukE. Overexpression results in anucleate cells. It has a calcium binding activity. The sequence is that of Chromosome partition protein MukF from Klebsiella pneumoniae subsp. pneumoniae (strain ATCC 700721 / MGH 78578).